Here is a 449-residue protein sequence, read N- to C-terminus: Trigger factor (449 aa).

Residues 160-231 (TDQVTIEELG…VQSVQTKQLQ (72 aa)) form the PPIase FKBP-type domain. A disordered region spans residues 411 to 449 (GQQVAGRQEAGAEQTAQAAEQESGQPQAEGEQAAEQRGE). Over residues 415 to 443 (AGRQEAGAEQTAQAAEQESGQPQAEGEQA) the composition is skewed to low complexity.

It belongs to the FKBP-type PPIase family. Tig subfamily.

The protein localises to the cytoplasm. It catalyses the reaction [protein]-peptidylproline (omega=180) = [protein]-peptidylproline (omega=0). In terms of biological role, involved in protein export. Acts as a chaperone by maintaining the newly synthesized protein in an open conformation. Functions as a peptidyl-prolyl cis-trans isomerase. This is Trigger factor from Deinococcus geothermalis (strain DSM 11300 / CIP 105573 / AG-3a).